Reading from the N-terminus, the 337-residue chain is Glyceraldehyde-3-phosphate dehydrogenase 2 (337 aa).

NAD(+)-binding positions include 11 to 12 (RI), aspartate 35, arginine 79, and threonine 121. D-glyceraldehyde 3-phosphate contacts are provided by residues 153–155 (SCT), threonine 184, arginine 199, 212–213 (TG), and arginine 235. The Nucleophile role is filled by cysteine 154. Position 317 (asparagine 317) interacts with NAD(+).

Belongs to the glyceraldehyde-3-phosphate dehydrogenase family. Homotetramer.

It is found in the cytoplasm. The catalysed reaction is D-glyceraldehyde 3-phosphate + phosphate + NADP(+) = (2R)-3-phospho-glyceroyl phosphate + NADPH + H(+). It catalyses the reaction D-glyceraldehyde 3-phosphate + phosphate + NAD(+) = (2R)-3-phospho-glyceroyl phosphate + NADH + H(+). It participates in carbohydrate degradation; glycolysis; pyruvate from D-glyceraldehyde 3-phosphate: step 1/5. Its function is as follows. Involved in photosynthetic carbon assimilation. Catalyzes the NAD(P)-dependent oxidative phosphorylation of glyceraldehyde 3-phosphate (G3P) to 1,3-bisphosphoglycerate (BPG). The first reaction step involves the formation of a hemiacetal intermediate between G3P and a cysteine residue, and this hemiacetal intermediate is then oxidized to a thioester, with concomitant reduction of NAD to NADH. The reduced NADH is then exchanged with the second NAD, and the thioester is attacked by a nucleophilic inorganic phosphate to produce BPG. It can use both NADP and NAD. The polypeptide is Glyceraldehyde-3-phosphate dehydrogenase 2 (gap2) (Synechocystis sp. (strain ATCC 27184 / PCC 6803 / Kazusa)).